The following is a 240-amino-acid chain: Lactate utilization protein C (240 aa).

The protein belongs to the LutC/YkgG family.

Is involved in L-lactate degradation and allows cells to grow with lactate as the sole carbon source. The sequence is that of Lactate utilization protein C from Bacillus licheniformis (strain ATCC 14580 / DSM 13 / JCM 2505 / CCUG 7422 / NBRC 12200 / NCIMB 9375 / NCTC 10341 / NRRL NRS-1264 / Gibson 46).